The following is a 312-amino-acid chain: Small ribosomal subunit protein uS2 (312 aa).

It belongs to the universal ribosomal protein uS2 family.

The sequence is that of Small ribosomal subunit protein uS2 from Ruthia magnifica subsp. Calyptogena magnifica.